The chain runs to 271 residues: Putative mitochondrial carrier protein PET8 (271 aa).

3 Solcar repeats span residues 3–76, 91–177, and 187–270; these read STFL…MKQQ, AEVL…LKKK, and VSAW…VHSL. 6 consecutive transmembrane segments (helical) span residues 6 to 26, 51 to 71, 97 to 117, 152 to 168, 193 to 213, and 251 to 271; these read LASLVSGAAAGTSTDVVFFPI, GLGSAVVASAPGASLFFVTYD, MLSSSLGEMSACLVRVPAEVI, GWWTTIMREIPFTCIQF, AVCGSLAGGIAAAATTPLDVL, and MWISAGGAIFLGVYEAVHSLF.

This sequence belongs to the mitochondrial carrier (TC 2.A.29) family.

It is found in the mitochondrion inner membrane. The chain is Putative mitochondrial carrier protein PET8 (PET8) from Eremothecium gossypii (strain ATCC 10895 / CBS 109.51 / FGSC 9923 / NRRL Y-1056) (Yeast).